A 382-amino-acid chain; its full sequence is Queuine tRNA-ribosyltransferase (382 aa).

The active-site Proton acceptor is aspartate 94. Substrate-binding positions include aspartate 94–phenylalanine 98, aspartate 148, glutamine 192, and glycine 219. The segment at glycine 250–aspartate 256 is RNA binding. The active-site Nucleophile is aspartate 269. An RNA binding; important for wobble base 34 recognition region spans residues threonine 274–arginine 278. Cysteine 307, cysteine 309, cysteine 312, and histidine 338 together coordinate Zn(2+).

This sequence belongs to the queuine tRNA-ribosyltransferase family. In terms of assembly, homodimer. Within each dimer, one monomer is responsible for RNA recognition and catalysis, while the other monomer binds to the replacement base PreQ1. It depends on Zn(2+) as a cofactor.

It carries out the reaction 7-aminomethyl-7-carbaguanine + guanosine(34) in tRNA = 7-aminomethyl-7-carbaguanosine(34) in tRNA + guanine. It functions in the pathway tRNA modification; tRNA-queuosine biosynthesis. In terms of biological role, catalyzes the base-exchange of a guanine (G) residue with the queuine precursor 7-aminomethyl-7-deazaguanine (PreQ1) at position 34 (anticodon wobble position) in tRNAs with GU(N) anticodons (tRNA-Asp, -Asn, -His and -Tyr). Catalysis occurs through a double-displacement mechanism. The nucleophile active site attacks the C1' of nucleotide 34 to detach the guanine base from the RNA, forming a covalent enzyme-RNA intermediate. The proton acceptor active site deprotonates the incoming PreQ1, allowing a nucleophilic attack on the C1' of the ribose to form the product. After dissociation, two additional enzymatic reactions on the tRNA convert PreQ1 to queuine (Q), resulting in the hypermodified nucleoside queuosine (7-(((4,5-cis-dihydroxy-2-cyclopenten-1-yl)amino)methyl)-7-deazaguanosine). This is Queuine tRNA-ribosyltransferase from Haemophilus ducreyi (strain 35000HP / ATCC 700724).